A 246-amino-acid chain; its full sequence is tRNA pseudouridine synthase A (246 aa).

Aspartate 52 functions as the Nucleophile in the catalytic mechanism. Residue tyrosine 111 participates in substrate binding.

It belongs to the tRNA pseudouridine synthase TruA family. Homodimer.

It carries out the reaction uridine(38/39/40) in tRNA = pseudouridine(38/39/40) in tRNA. Its function is as follows. Formation of pseudouridine at positions 38, 39 and 40 in the anticodon stem and loop of transfer RNAs. This chain is tRNA pseudouridine synthase A, found in Ehrlichia ruminantium (strain Welgevonden).